A 467-amino-acid chain; its full sequence is MTLTLYNTLTRKKEPFVPLEEGKVKMYVCGPTVYNYIHIGNARPAIVFDTVRKYLEYKGYEVQYVSNFTDVDDKLIKAANELGEEVPVIAERFIKAYFEDVGSLGCTKADCHPRVTENMDEIIDFIQTLIDKGYAYEADGDVYYKTRSFEGYGKLSHQSVDELRSGARIQVGEKKEDALDFTLWKAAKDNEISWDSPWGKGRPGWHIECSAMARKYLGDSIDIHAGGQDLAFPHHENEIAQSEALTGKPFAKYWLHNGYINIDNEKMSKSLGNFVLVHDIIKEHDPQVLRFFMLSVHYRHPINYSVELLENTKNAFGRLKTAYSNLQHRLKSSTNLTEGDSEWLEKIEEQRKAFQTAMDDDFNTANAISVLFDLAKHANYYLQEKNTAEHVIQAFIQLFDEICSVLGFSLKEQELLDKDIEELIEKRNEARRNRDFATSDQIRDQLKSMNIILEDTPQGTRWKRGES.

Cysteine 29 contributes to the Zn(2+) binding site. Residues 31–41 carry the 'HIGH' region motif; it reads PTVYNYIHIGN. Zn(2+) contacts are provided by cysteine 209, histidine 234, and glutamate 238. The short motif at 266 to 270 is the 'KMSKS' region element; it reads KMSKS. Lysine 269 is a binding site for ATP. The residue at position 270 (serine 270) is a Phosphoserine.

It belongs to the class-I aminoacyl-tRNA synthetase family. In terms of assembly, monomer. It depends on Zn(2+) as a cofactor.

It localises to the cytoplasm. The enzyme catalyses tRNA(Cys) + L-cysteine + ATP = L-cysteinyl-tRNA(Cys) + AMP + diphosphate. In Bacillus licheniformis (strain ATCC 14580 / DSM 13 / JCM 2505 / CCUG 7422 / NBRC 12200 / NCIMB 9375 / NCTC 10341 / NRRL NRS-1264 / Gibson 46), this protein is Cysteine--tRNA ligase.